Here is a 178-residue protein sequence, read N- to C-terminus: Nicotinamide-nucleotide adenylyltransferase (178 aa).

This sequence belongs to the archaeal NMN adenylyltransferase family. In terms of assembly, homohexamer.

Its subcellular location is the cytoplasm. The enzyme catalyses beta-nicotinamide D-ribonucleotide + ATP + H(+) = diphosphate + NAD(+). Its pathway is cofactor biosynthesis; NAD(+) biosynthesis; NAD(+) from nicotinamide D-ribonucleotide: step 1/1. The sequence is that of Nicotinamide-nucleotide adenylyltransferase from Methanothermobacter thermautotrophicus (strain ATCC 29096 / DSM 1053 / JCM 10044 / NBRC 100330 / Delta H) (Methanobacterium thermoautotrophicum).